A 236-amino-acid chain; its full sequence is MQHANTTALYLIGSDESGKGDSFGGIAVSAVLIHKDKINTLHQIGVGDSKQFNDYQIKALVPKIKAAVHDQVTLSVDAKTYNQLVQSFKNVNVMLTFLHCKVYHQLLQQNKLTAQQCDISIDEFANVKLFTQYTQKLTSLQNELKELVIPNHFLIRGESYSKVIAAASILARAAFIAQMEQLSHQYGVQFPKGSAHGIVEALHLLKTKRQFHKFAQYSAVCKTTFKNVASFLKQLA.

Positions 9–236 (LYLIGSDESG…NVASFLKQLA (228 aa)) constitute an RNase H type-2 domain. Residues D15, E16, and D122 each coordinate a divalent metal cation.

The protein belongs to the RNase HII family. RnhC subfamily. The cofactor is a divalent metal cation.

It localises to the cytoplasm. The catalysed reaction is Endonucleolytic cleavage to 5'-phosphomonoester.. Functionally, endonuclease that specifically degrades the RNA of RNA-DNA hybrids. The protein is Ribonuclease HIII (rnhC) of Mycoplasma pneumoniae (strain ATCC 29342 / M129 / Subtype 1) (Mycoplasmoides pneumoniae).